The sequence spans 107 residues: Large ribosomal subunit protein uL24 (107 aa).

The protein belongs to the universal ribosomal protein uL24 family. In terms of assembly, part of the 50S ribosomal subunit.

Functionally, one of two assembly initiator proteins, it binds directly to the 5'-end of the 23S rRNA, where it nucleates assembly of the 50S subunit. Its function is as follows. One of the proteins that surrounds the polypeptide exit tunnel on the outside of the subunit. The sequence is that of Large ribosomal subunit protein uL24 from Solidesulfovibrio magneticus (strain ATCC 700980 / DSM 13731 / RS-1) (Desulfovibrio magneticus).